Here is a 389-residue protein sequence, read N- to C-terminus: GTPase Obg (389 aa).

Residues 1–159 enclose the Obg domain; that stretch reads MKFVDEAVIR…RSLKLELLLL (159 aa). An OBG-type G domain is found at 160–333; it reads ADVGLLGMPN…LALKLLDYIA (174 aa). GTP is bound by residues 166–173, 191–195, 213–216, 283–286, and 314–316; these read GMPNAGKS, FTTLV, DIPG, NKTD, and SAY. Mg(2+)-binding residues include Ser173 and Thr193.

It belongs to the TRAFAC class OBG-HflX-like GTPase superfamily. OBG GTPase family. As to quaternary structure, monomer. The cofactor is Mg(2+).

The protein resides in the cytoplasm. In terms of biological role, an essential GTPase which binds GTP, GDP and possibly (p)ppGpp with moderate affinity, with high nucleotide exchange rates and a fairly low GTP hydrolysis rate. Plays a role in control of the cell cycle, stress response, ribosome biogenesis and in those bacteria that undergo differentiation, in morphogenesis control. This is GTPase Obg from Shewanella baltica (strain OS223).